The following is a 543-amino-acid chain: Zinc finger protein 34 (543 aa).

In terms of domain architecture, KRAB spans 14 to 87 (VTFEDVAVFL…DMHGAEQPSV (74 aa)). The segment at 84-151 (QPSVDGSAHG…PGEQRGPRLV (68 aa)) is disordered. Residues 124-147 (EPGEVHERVREPEGRLDRPGEQRG) are compositionally biased toward basic and acidic residues. 12 C2H2-type zinc fingers span residues 179 to 201 (HKCDICEQSFEQRSYLNNHKRVH), 234 to 256 (YYCGCCGKAFRYSANLVKHQRLH), 262 to 284 (YKCEECGKAFHQSCELISHRRMH), 290 to 312 (YRCDECGKTFNQRPNLMKHQRIH), 318 to 340 (YKCSECGKHFSAYSSLIYHQRIH), 346 to 368 (YKCSDCGKAFSDGSILIRHRRTH), 374 to 396 (YECKECGKGFTQSSNLIQHQRIH), 402 to 424 (YKCNECEKAFIQKTKLVEHQRSH), 430 to 452 (YECNDCGKVFSQSTHLIQHQRIH), 458 to 480 (YKCSECGKAFHNSSRLIHHQRSH), 486 to 508 (YKCADCKKAFSQGTYLLQHRRIH), and 514 to 536 (YTCGECGKAFRHSSNMSQHQRIH).

The protein belongs to the krueppel C2H2-type zinc-finger protein family.

It localises to the nucleus. In terms of biological role, may be involved in transcriptional regulation. The protein is Zinc finger protein 34 (ZNF34) of Bos taurus (Bovine).